A 277-amino-acid polypeptide reads, in one-letter code: Caspase-3 (277 aa).

An N-acetylmethionine modification is found at M1. Propeptides lie at residues 1–9 (MENNKTSVD) and 10–28 (SKSI…KSVD). K11 carries the post-translational modification N6-acetyllysine. A Phosphoserine modification is found at S26. Active-site residues include H121 and C163. C163 carries the S-nitrosocysteine; in inhibited form modification.

Belongs to the peptidase C14A family. As to quaternary structure, heterotetramer that consists of two anti-parallel arranged heterodimers, each one formed by a 17 kDa (p17) and a 12 kDa (p12) subunit. Interacts with BIRC6/bruce. Post-translationally, cleavage by granzyme B, caspase-6, caspase-8 and caspase-10 generates the two active subunits. Additional processing of the propeptides is likely due to the autocatalytic activity of the activated protease. Active heterodimers between the small subunit of caspase-7 protease and the large subunit of caspase-3 also occur and vice versa. In terms of processing, S-nitrosylated on its catalytic site cysteine in unstimulated cell lines and denitrosylated upon activation of the Fas apoptotic pathway, associated with an increase in intracellular caspase activity. Fas therefore activates caspase-3 not only by inducing the cleavage of the caspase zymogen to its active subunits, but also by stimulating the denitrosylation of its active site thiol. Ubiquitinated by BIRC6; this activity is inhibited by DIABLO/SMAC. Highest expression in spleen, lung, liver, kidney and heart. Lower expression in brain, skeletal muscle and testis.

Its subcellular location is the cytoplasm. The catalysed reaction is Strict requirement for an Asp residue at positions P1 and P4. It has a preferred cleavage sequence of Asp-Xaa-Xaa-Asp-|- with a hydrophobic amino-acid residue at P2 and a hydrophilic amino-acid residue at P3, although Val or Ala are also accepted at this position.. With respect to regulation, inhibited by BIRC6; following inhibition of BIRC6-caspase binding by DIABLO/SMAC, BIRC6 is subjected to caspase cleavage, leading to an increase in active caspases. In terms of biological role, thiol protease that acts as a major effector caspase involved in the execution phase of apoptosis. Following cleavage and activation by initiator caspases (CASP8, CASP9 and/or CASP10), mediates execution of apoptosis by catalyzing cleavage of many proteins. At the onset of apoptosis, it proteolytically cleaves poly(ADP-ribose) polymerase PARP1 at a '216-Asp-|-Gly-217' bond. Cleaves and activates sterol regulatory element binding proteins (SREBPs) between the basic helix-loop-helix leucine zipper domain and the membrane attachment domain. Cleaves and activates caspase-6, -7 and -9 (CASP6, CASP7 and CASP9, respectively). Cleaves and inactivates interleukin-18 (IL18). Triggers cell adhesion in sympathetic neurons through RET cleavage. Cleaves IL-1 beta between an Asp and an Ala, releasing the mature cytokine which is involved in a variety of inflammatory processes. Cleaves and inhibits serine/threonine-protein kinase AKT1 in response to oxidative stress. Acts as an inhibitor of type I interferon production during virus-induced apoptosis by mediating cleavage of antiviral proteins CGAS, IRF3 and MAVS, thereby preventing cytokine overproduction. Also involved in pyroptosis by mediating cleavage and activation of gasdermin-E (GSDME). Cleaves XRCC4 and phospholipid scramblase proteins XKR4, XKR8 and XKR9, leading to promote phosphatidylserine exposure on apoptotic cell surface. Cleaves BIRC6 following inhibition of BIRC6-caspase binding by DIABLO/SMAC. The chain is Caspase-3 (Casp3) from Mus musculus (Mouse).